We begin with the raw amino-acid sequence, 462 residues long: UDP-N-acetylmuramoylalanine--D-glutamate ligase (462 aa).

Gly118 to Thr124 contacts ATP.

Belongs to the MurCDEF family.

The protein localises to the cytoplasm. The enzyme catalyses UDP-N-acetyl-alpha-D-muramoyl-L-alanine + D-glutamate + ATP = UDP-N-acetyl-alpha-D-muramoyl-L-alanyl-D-glutamate + ADP + phosphate + H(+). It participates in cell wall biogenesis; peptidoglycan biosynthesis. Functionally, cell wall formation. Catalyzes the addition of glutamate to the nucleotide precursor UDP-N-acetylmuramoyl-L-alanine (UMA). The chain is UDP-N-acetylmuramoylalanine--D-glutamate ligase from Anaeromyxobacter dehalogenans (strain 2CP-C).